We begin with the raw amino-acid sequence, 278 residues long: Tumor necrosis factor receptor superfamily member 5 (278 aa).

The first 20 residues, 1 to 20 (MVRLPLKCLLWGCFLTAVHP), serve as a signal peptide directing secretion. The Extracellular portion of the chain corresponds to 21–194 (EPPTSCKENQ…VCGFQSRMRA (174 aa)). TNFR-Cys repeat units follow at residues 25–60 (SCKE…TECL), 61–103 (PCSS…DTTC), 104–144 (VCSE…TICE), and 145–187 (PCPV…VVCG). 8 cysteine pairs are disulfide-bonded: cysteine 26–cysteine 37, cysteine 38–cysteine 51, cysteine 41–cysteine 59, cysteine 62–cysteine 77, cysteine 83–cysteine 103, cysteine 105–cysteine 119, cysteine 111–cysteine 116, and cysteine 125–cysteine 143. 2 N-linked (GlcNAc...) asparagine glycosylation sites follow: asparagine 153 and asparagine 180. The chain crosses the membrane as a helical span at residues 195–215 (LVVIPITLGILFAVLLVFLCI). The Cytoplasmic portion of the chain corresponds to 216–278 (RKVTKEQETK…ESRISVQERE (63 aa)).

Monomer and homodimer. Interacts with TRAF1, TRAF2, TRAF3, TRAF5 and TRAF6. Interacts with TRAF6 and MAP3K8; the interaction is required for ERK activation.

The protein localises to the membrane. In terms of biological role, receptor for TNFSF5/CD40LG. Transduces TRAF6- and MAP3K8-mediated signals that activate ERK in macrophages and B cells, leading to induction of immunoglobulin secretion. This is Tumor necrosis factor receptor superfamily member 5 (CD40) from Sus scrofa (Pig).